The primary structure comprises 188 residues: Murein DD-endopeptidase MepS/Murein LD-carboxypeptidase (188 aa).

Positions 1–26 (MVKSQPILRYILRGIPAIAVAVLLSA) are cleaved as a signal peptide. The N-palmitoyl cysteine moiety is linked to residue cysteine 27. Cysteine 27 carries S-diacylglycerol cysteine lipidation. The 122-residue stretch at 64–185 (VDVKSRIMDQ…KRYNEARRVL (122 aa)) folds into the NlpC/P60 domain. The Nucleophile role is filled by cysteine 94. Histidine 145 functions as the Proton acceptor in the catalytic mechanism. Residue histidine 157 is part of the active site.

This sequence belongs to the peptidase C40 family. As to quaternary structure, monomer.

The protein localises to the cell outer membrane. The enzyme catalyses N-acetyl-D-glucosaminyl-N-acetylmuramoyl-L-alanyl-meso-2,6-diaminoheptanedioyl-D-alanine + H2O = N-acetyl-D-glucosaminyl-N-acetylmuramoyl-L-alanyl-meso-2,6-diaminoheptanedioate + D-alanine. It functions in the pathway cell wall biogenesis; cell wall polysaccharide biosynthesis. Its function is as follows. A murein DD-endopeptidase with specificity for D-Ala-meso-diaminopimelic acid (mDAP) cross-links. Its role is probably to cleave D-Ala-mDAP cross-links to allow insertion of new glycans and thus cell wall expansion. Functionally redundant with MepM and MepH. Also has weak LD-carboxypeptidase activity on L-mDAP-D-Ala peptide bonds. The polypeptide is Murein DD-endopeptidase MepS/Murein LD-carboxypeptidase (mepS) (Escherichia coli O157:H7).